Reading from the N-terminus, the 304-residue chain is Non-specific ribonucleoside hydrolase RihC (304 aa).

Residue H233 is part of the active site.

It belongs to the IUNH family. RihC subfamily.

In terms of biological role, hydrolyzes both purine and pyrimidine ribonucleosides with a broad-substrate specificity. The sequence is that of Non-specific ribonucleoside hydrolase RihC from Escherichia coli O139:H28 (strain E24377A / ETEC).